The chain runs to 251 residues: CDP-diacylglycerol pyrophosphatase (251 aa).

A helical transmembrane segment spans residues 4–24 (AGLLFLVMIVIAVVAAGIGYW).

It belongs to the Cdh family.

It is found in the cell inner membrane. It catalyses the reaction a CDP-1,2-diacyl-sn-glycerol + H2O = a 1,2-diacyl-sn-glycero-3-phosphate + CMP + 2 H(+). It functions in the pathway phospholipid metabolism; CDP-diacylglycerol degradation; phosphatidate from CDP-diacylglycerol: step 1/1. This chain is CDP-diacylglycerol pyrophosphatase, found in Escherichia coli O81 (strain ED1a).